Here is a 65-residue protein sequence, read N- to C-terminus: Large ribosomal subunit protein bL32 (65 aa).

Residues 1-45 (MAVQQNKKTPSKRGMRRAHDVLKKPTFSVDFSSGETHRRHHVTPD) are disordered.

Belongs to the bacterial ribosomal protein bL32 family.

This Nitrosococcus oceani (strain ATCC 19707 / BCRC 17464 / JCM 30415 / NCIMB 11848 / C-107) protein is Large ribosomal subunit protein bL32.